Here is a 182-residue protein sequence, read N- to C-terminus: Inner membrane-spanning protein YciB (182 aa).

5 helical membrane passes run 22–42, 53–73, 76–96, 121–141, and 149–169; these read IYAA…VVWV, ITLV…NEAF, WKVT…QFLF, FSWG…AFYL, and FKVF…GIYI.

The protein belongs to the YciB family.

It localises to the cell inner membrane. Functionally, plays a role in cell envelope biogenesis, maintenance of cell envelope integrity and membrane homeostasis. In Tolumonas auensis (strain DSM 9187 / NBRC 110442 / TA 4), this protein is Inner membrane-spanning protein YciB.